We begin with the raw amino-acid sequence, 208 residues long: Protein JLP2 (208 aa).

A compositionally biased stretch (basic residues) spans 185-194 (AKKNQKKKNK). Residues 185 to 208 (AKKNQKKKNKQSKDEVTDDMQLEV) form a disordered region.

It belongs to the CCDC25 family.

It is found in the cytoplasm. This Saccharomyces cerevisiae (strain ATCC 204508 / S288c) (Baker's yeast) protein is Protein JLP2 (JLP2).